Consider the following 187-residue polypeptide: NADH-quinone oxidoreductase subunit B (187 aa).

Residues Cys66, Cys67, Cys131, and Cys161 each contribute to the [4Fe-4S] cluster site.

This sequence belongs to the complex I 20 kDa subunit family. NDH-1 is composed of 14 different subunits. Subunits NuoB, C, D, E, F, and G constitute the peripheral sector of the complex. It depends on [4Fe-4S] cluster as a cofactor.

The protein localises to the cell inner membrane. It catalyses the reaction a quinone + NADH + 5 H(+)(in) = a quinol + NAD(+) + 4 H(+)(out). Functionally, NDH-1 shuttles electrons from NADH, via FMN and iron-sulfur (Fe-S) centers, to quinones in the respiratory chain. The immediate electron acceptor for the enzyme in this species is believed to be ubiquinone. Couples the redox reaction to proton translocation (for every two electrons transferred, four hydrogen ions are translocated across the cytoplasmic membrane), and thus conserves the redox energy in a proton gradient. This chain is NADH-quinone oxidoreductase subunit B, found in Methylocella silvestris (strain DSM 15510 / CIP 108128 / LMG 27833 / NCIMB 13906 / BL2).